We begin with the raw amino-acid sequence, 156 residues long: SsrA-binding protein (156 aa).

Positions 134–156 (YDKRETLKRKEQDREMARALRKR) are disordered.

It belongs to the SmpB family.

It is found in the cytoplasm. Required for rescue of stalled ribosomes mediated by trans-translation. Binds to transfer-messenger RNA (tmRNA), required for stable association of tmRNA with ribosomes. tmRNA and SmpB together mimic tRNA shape, replacing the anticodon stem-loop with SmpB. tmRNA is encoded by the ssrA gene; the 2 termini fold to resemble tRNA(Ala) and it encodes a 'tag peptide', a short internal open reading frame. During trans-translation Ala-aminoacylated tmRNA acts like a tRNA, entering the A-site of stalled ribosomes, displacing the stalled mRNA. The ribosome then switches to translate the ORF on the tmRNA; the nascent peptide is terminated with the 'tag peptide' encoded by the tmRNA and targeted for degradation. The ribosome is freed to recommence translation, which seems to be the essential function of trans-translation. This chain is SsrA-binding protein, found in Latilactobacillus sakei subsp. sakei (strain 23K) (Lactobacillus sakei subsp. sakei).